We begin with the raw amino-acid sequence, 258 residues long: Methylthioribulose-1-phosphate dehydratase (258 aa).

A disordered region spans residues 1–21 (MCSPTTENNNNNNDHLVQSSD). Cysteine 105 serves as a coordination point for substrate. Positions 123 and 125 each coordinate Zn(2+). Glutamate 153 (proton donor/acceptor) is an active-site residue. Histidine 210 lines the Zn(2+) pocket.

This sequence belongs to the aldolase class II family. MtnB subfamily. Zn(2+) is required as a cofactor.

Its subcellular location is the cytoplasm. The enzyme catalyses 5-(methylsulfanyl)-D-ribulose 1-phosphate = 5-methylsulfanyl-2,3-dioxopentyl phosphate + H2O. It functions in the pathway amino-acid biosynthesis; L-methionine biosynthesis via salvage pathway; L-methionine from S-methyl-5-thio-alpha-D-ribose 1-phosphate: step 2/6. Catalyzes the dehydration of methylthioribulose-1-phosphate (MTRu-1-P) into 2,3-diketo-5-methylthiopentyl-1-phosphate (DK-MTP-1-P). This Neurospora crassa (strain ATCC 24698 / 74-OR23-1A / CBS 708.71 / DSM 1257 / FGSC 987) protein is Methylthioribulose-1-phosphate dehydratase.